Consider the following 264-residue polypeptide: Purine nucleoside phosphorylase slr1573 (264 aa).

3 residues coordinate Zn(2+): His-61, Cys-104, and His-121.

Belongs to the purine nucleoside phosphorylase YfiH/LACC1 family. In terms of assembly, homodimer. Requires Cu(2+) as cofactor. Zn(2+) is required as a cofactor.

The catalysed reaction is adenosine + phosphate = alpha-D-ribose 1-phosphate + adenine. The enzyme catalyses S-methyl-5'-thioadenosine + phosphate = 5-(methylsulfanyl)-alpha-D-ribose 1-phosphate + adenine. It carries out the reaction inosine + phosphate = alpha-D-ribose 1-phosphate + hypoxanthine. It catalyses the reaction adenosine + H2O + H(+) = inosine + NH4(+). Its function is as follows. Purine nucleoside enzyme that catalyzes the phosphorolysis of adenosine and inosine nucleosides, yielding D-ribose 1-phosphate and the respective free bases, adenine and hypoxanthine. Also catalyzes the phosphorolysis of S-methyl-5'-thioadenosine into adenine and S-methyl-5-thio-alpha-D-ribose 1-phosphate. Also has adenosine deaminase activity. The protein is Purine nucleoside phosphorylase slr1573 of Synechocystis sp. (strain ATCC 27184 / PCC 6803 / Kazusa).